The chain runs to 258 residues: Acyl-[acyl-carrier-protein]--UDP-N-acetylglucosamine O-acyltransferase (258 aa).

Belongs to the transferase hexapeptide repeat family. LpxA subfamily. In terms of assembly, homotrimer.

It is found in the cytoplasm. It carries out the reaction a (3R)-hydroxyacyl-[ACP] + UDP-N-acetyl-alpha-D-glucosamine = a UDP-3-O-[(3R)-3-hydroxyacyl]-N-acetyl-alpha-D-glucosamine + holo-[ACP]. It participates in glycolipid biosynthesis; lipid IV(A) biosynthesis; lipid IV(A) from (3R)-3-hydroxytetradecanoyl-[acyl-carrier-protein] and UDP-N-acetyl-alpha-D-glucosamine: step 1/6. Its function is as follows. Involved in the biosynthesis of lipid A, a phosphorylated glycolipid that anchors the lipopolysaccharide to the outer membrane of the cell. This chain is Acyl-[acyl-carrier-protein]--UDP-N-acetylglucosamine O-acyltransferase, found in Thermodesulfovibrio yellowstonii (strain ATCC 51303 / DSM 11347 / YP87).